A 363-amino-acid chain; its full sequence is 3-isopropylmalate dehydrogenase (363 aa).

78-91 (GPKWEHLPPDQQPE) provides a ligand contact to NAD(+). Positions 99, 109, 138, and 227 each coordinate substrate. Residues Asp-227, Asp-251, and Asp-255 each coordinate Mg(2+). 285–297 (GSAPDIAGKNIAN) is a binding site for NAD(+).

This sequence belongs to the isocitrate and isopropylmalate dehydrogenases family. LeuB type 1 subfamily. In terms of assembly, homodimer. Requires Mg(2+) as cofactor. Mn(2+) is required as a cofactor.

Its subcellular location is the cytoplasm. The enzyme catalyses (2R,3S)-3-isopropylmalate + NAD(+) = 4-methyl-2-oxopentanoate + CO2 + NADH. The protein operates within amino-acid biosynthesis; L-leucine biosynthesis; L-leucine from 3-methyl-2-oxobutanoate: step 3/4. Its activity is regulated as follows. Requires K(+) ions for optimum activity. In terms of biological role, catalyzes the oxidation of 3-carboxy-2-hydroxy-4-methylpentanoate (3-isopropylmalate) to 3-carboxy-4-methyl-2-oxopentanoate. The product decarboxylates to 4-methyl-2 oxopentanoate. This chain is 3-isopropylmalate dehydrogenase, found in Escherichia coli (strain K12).